The chain runs to 411 residues: cAMP-dependent protein kinase regulatory subunit (411 aa).

Residues 1 to 144 (MAESAFPSAQ…SWTPPYHEKT (144 aa)) are disordered. Residues 23–159 (AAFQKISEED…RLKTAVSSNF (137 aa)) form a dimerization and phosphorylation region. Positions 46–58 (SANAAAASSSTGS) are enriched in low complexity. The span at 85 to 96 (EEDEEGADEFPP) shows a compositional bias: acidic residues. Residues 119–136 (TSVSAESLNPTSAGSDSW) are compositionally biased toward polar residues. Position 120 is a phosphoserine (S120). Residues 160 to 289 (LFSH…FLEE), E238, R247, 292 to 411 (LLSS…PVPA), E359, and R368 contribute to the 3',5'-cyclic AMP site.

It belongs to the cAMP-dependent kinase regulatory chain family. In terms of assembly, tetramer, composed of 2 regulatory (R) and 2 catalytic (C) subunits. In the presence of cAMP it dissociates into 2 active monomeric C subunits and an R dimer.

This Aspergillus niger protein is cAMP-dependent protein kinase regulatory subunit (pkaR).